The chain runs to 113 residues: MPFQSTVGDYQTVATLETFGFLPPMTQDEIYDQIAYIIAQGWSPLVEHVHPSNSMATYWSYWKLPFFGEKDLNVVVSELEACHRAYPDHHVRIVGYDAYTQSQGACFVVFEGR.

Belongs to the RuBisCO small chain family. As to quaternary structure, heterohexadecamer of 8 large and 8 small subunits.

It is found in the carboxysome. Functionally, ruBisCO catalyzes two reactions: the carboxylation of D-ribulose 1,5-bisphosphate, the primary event in carbon dioxide fixation, as well as the oxidative fragmentation of the pentose substrate in the photorespiration process. Both reactions occur simultaneously and in competition at the same active site. Although the small subunit is not catalytic it is essential for maximal activity. In Synechococcus sp. (strain WH7803), this protein is Ribulose bisphosphate carboxylase small subunit.